We begin with the raw amino-acid sequence, 162 residues long: Protein A49R (162 aa).

Belongs to the poxviridae A49 protein family. As to quaternary structure, interacts with host BTRC; this interaction inhibits NF-kappa-B activation.

The protein resides in the host cytoplasm. The protein localises to the host nucleus. Its function is as follows. Plays a role in the inhibition of host NF-kappa-B activation. Interacts with host BTRC and thereby diminishes ubiquitination of NF-kappa-B inhibitor alpha/NFKBIA. This stabilizes NFKBIA and its interaction with NF-kappaB, so retaining p65/RELA in the cytoplasm and preventing NF-kappa-B-dependent gene expression. This Bos taurus (Bovine) protein is Protein A49R.